Consider the following 78-residue polypeptide: Translation initiation factor IF-1 (78 aa).

Positions 4 to 78 (KFNNQAKQDK…LKLGRIIGRK (75 aa)) constitute an S1-like domain.

Belongs to the IF-1 family. As to quaternary structure, component of the 30S ribosomal translation pre-initiation complex which assembles on the 30S ribosome in the order IF-2 and IF-3, IF-1 and N-formylmethionyl-tRNA(fMet); mRNA recruitment can occur at any time during PIC assembly.

The protein resides in the cytoplasm. Functionally, one of the essential components for the initiation of protein synthesis. Stabilizes the binding of IF-2 and IF-3 on the 30S subunit to which N-formylmethionyl-tRNA(fMet) subsequently binds. Helps modulate mRNA selection, yielding the 30S pre-initiation complex (PIC). Upon addition of the 50S ribosomal subunit IF-1, IF-2 and IF-3 are released leaving the mature 70S translation initiation complex. This is Translation initiation factor IF-1 from Mycoplasma pneumoniae (strain ATCC 29342 / M129 / Subtype 1) (Mycoplasmoides pneumoniae).